Here is an 82-residue protein sequence, read N- to C-terminus: Mu-conotoxin GVIIJ (82 aa).

A signal peptide spans 1–22; it reads MKLTCVVIVAALLLTACQLITA. A propeptide spanning residues 23–47 is cleaved from the precursor; it reads LDCGGTQKHRALRSTIKLSLLRQHR. W49 is subject to 6'-bromotryptophan. 3 disulfides stabilise this stretch: C50–C65, C57–C69, and C64–C76. 4-hydroxyproline is present on P53. Residue C71 participates in a protein binding.

The protein belongs to the conotoxin O1 superfamily. In terms of processing, cys-71 is a key residue that tethers to the channel by covalent attachment, leading to nearly irreversible inhibition (k(off) very low). In order to determine the solution structure without dimerization, this residue was mutated to Cys. Expressed by the venom duct.

Its subcellular location is the secreted. Functionally, mu-conotoxins block voltage-gated sodium channels (Nav). This toxin (GVIIJ(SSG)) blocks Nav1.1/SCN1A (Kd=11 nM), Nav1.2/SCN2A (Kd=11 nM), Nav1.3/SCN3A (Kd=15 nM), Nav1.4/SCN4A (Kd=4.7 nM), Nav1.6/SCN8A (Kd=360 nM) and Nav1.7/SCN9A (Kd=41 nM). It binds the channel at the newly described site 8, which is composed by two surfaces whose one contains a non-disulfide-bonded cysteine (which is free to covalently bind the toxin Cys-71). It is noteworthy that coexpression of subunits beta-2 or beta-4 (but not beta-1 or beta-3) protects rNav1.1-1.7 against block by the toxin, since these subunits (thanks to their extracellular domain) covalently bind to the key cysteine of the channel, thus preventing the covalent binding of the toxin. The sequence is that of Mu-conotoxin GVIIJ from Conus geographus (Geography cone).